Reading from the N-terminus, the 482-residue chain is Ribosomal RNA small subunit methyltransferase F (482 aa).

Residues 119–125, glutamate 143, aspartate 170, and aspartate 188 contribute to the S-adenosyl-L-methionine site; that span reads ASAPGSK. Cysteine 241 serves as the catalytic Nucleophile.

It belongs to the class I-like SAM-binding methyltransferase superfamily. RsmB/NOP family.

The protein resides in the cytoplasm. The enzyme catalyses cytidine(1407) in 16S rRNA + S-adenosyl-L-methionine = 5-methylcytidine(1407) in 16S rRNA + S-adenosyl-L-homocysteine + H(+). Specifically methylates the cytosine at position 1407 (m5C1407) of 16S rRNA. In Shewanella sp. (strain MR-7), this protein is Ribosomal RNA small subunit methyltransferase F.